Consider the following 410-residue polypeptide: Structure-specific endonuclease subunit SLX1 homolog (410 aa).

The GIY-YIG domain maps to 6-89 (QLHYCYFLLS…NICKVTRDNI (84 aa)).

The protein belongs to the SLX1 family. In terms of assembly, forms a heterodimer with a member of the SLX4 family. A divalent metal cation is required as a cofactor.

The protein resides in the nucleus. In terms of biological role, catalytic subunit of a heterodimeric structure-specific endonuclease that resolves DNA secondary structures generated during DNA repair and recombination. Has endonuclease activity towards branched DNA substrates, introducing single-strand cuts in duplex DNA close to junctions with ss-DNA. This chain is Structure-specific endonuclease subunit SLX1 homolog, found in Cryptosporidium parvum (strain Iowa II).